A 216-amino-acid chain; its full sequence is Uracil phosphoribosyltransferase (216 aa).

Residues Arg85, Arg110, and 135 to 143 each bind 5-phospho-alpha-D-ribose 1-diphosphate; that span reads DPMVATGYS. Residues Ile200 and 205 to 207 each bind uracil; that span reads GDA. Asp206 lines the 5-phospho-alpha-D-ribose 1-diphosphate pocket.

The protein belongs to the UPRTase family. Mg(2+) is required as a cofactor.

The enzyme catalyses UMP + diphosphate = 5-phospho-alpha-D-ribose 1-diphosphate + uracil. Its pathway is pyrimidine metabolism; UMP biosynthesis via salvage pathway; UMP from uracil: step 1/1. Allosterically activated by GTP. In terms of biological role, catalyzes the conversion of uracil and 5-phospho-alpha-D-ribose 1-diphosphate (PRPP) to UMP and diphosphate. The sequence is that of Uracil phosphoribosyltransferase from Paraburkholderia phymatum (strain DSM 17167 / CIP 108236 / LMG 21445 / STM815) (Burkholderia phymatum).